The sequence spans 876 residues: Serrate RNA effector molecule homolog (876 aa).

Residues 1-90 are disordered; sequence MGDSDDEYDR…RRDWDEHSSD (90 aa). The residue at position 2 (G2) is an N-acetylglycine. Position 4 is a phosphoserine (S4). Y8 is subject to Phosphotyrosine. Residues 8–73 are compositionally biased toward basic and acidic residues; that stretch reads YDRRRRDKFR…ERFSPPRHEL (66 aa). Residues S67, S74, and S136 each carry the phosphoserine modification. K150 participates in a covalent cross-link: Glycyl lysine isopeptide (Lys-Gly) (interchain with G-Cter in SUMO2). The disordered stretch occupies residues 272–413; sequence EEEEQAGKPG…PKDAPGLECK (142 aa). The segment covering 297–347 has biased composition (basic and acidic residues); sequence DGERKANEKDDKKEDGKQAENESSSDDKIKKSEGDGDKEEKKEDSEKEAKK. A compositionally biased stretch (acidic residues) spans 370–387; that stretch reads SESESESGQAEEEKEEAD. Basic and acidic residues predominate over residues 388–413; sequence ETLKEKEKPKEEEREKPKDAPGLECK. Position 493 is a phosphoserine (S493). T544 carries the phosphothreonine modification. Position 570 is a phosphoserine (S570). The segment at 575–597 is disordered; sequence ELLGSSGGAPPEEPPKEGNPAEI. T671 bears the Phosphothreonine mark. The residue at position 679 (S679) is a Phosphoserine. Residues R833, R840, and R850 each carry the omega-N-methylarginine modification. The disordered stretch occupies residues 835–854; the sequence is NYDAFRGQGGYPGKPRNRMV.

Belongs to the ARS2 family. In terms of assembly, interacts with CASP8AP2, ERBB4, NCBP1/CBP80 and DROSHA. Interacts with LUZP4. Interacts with NCBP2/CBP20 and NCBP3. Interacts with MTREX.

The protein localises to the nucleus. Its subcellular location is the nucleoplasm. The protein resides in the cytoplasm. Functionally, acts as a mediator between the cap-binding complex (CBC) and the primary microRNAs (miRNAs) processing machinery during cell proliferation. Contributes to the stability and delivery of capped primary miRNA transcripts to the primary miRNA processing complex containing DGCR8 and DROSHA, thereby playing a role in RNA-mediated gene silencing (RNAi) by miRNAs. Binds capped RNAs (m7GpppG-capped RNA); however interaction is probably mediated via its interaction with NCBP1/CBP80 component of the CBC complex. Involved in cell cycle progression at S phase. Does not directly confer arsenite resistance but rather modulates arsenic sensitivity. Independently of its activity on miRNAs, necessary and sufficient to promote neural stem cell self-renewal. Does so by directly binding SOX2 promoter and positively regulating its transcription. In Bos taurus (Bovine), this protein is Serrate RNA effector molecule homolog (SRRT).